The sequence spans 412 residues: MAKPQATVLIIGAGISGLTTSRLLTNSGIPNIVFEASTPDRSQGFAISLQEFGYSALLSALGDLPLSSLIRGVAPDREIGGTGWIDQALRDNCTGELLVAPDLTTAKQTVVRANRNALRRWIADCGEEELDVRYGHKLQSVEGTVGDITAVFENKARYRGSLVVAADGVNSTIRSQVLPGVVPETIPLIHYHGEFQLSRTAFDELIRPHSGHSNILVGVGDGFNTPLSICNMTKTQVHLDWSYSRTVTGDDDLLYRPNLPSEEAKQIPPALVKELAALALAEPWKRFLNPESLKSHRVFHWTTRCVYMTQDDARRAGEQGVVFVGDSWHAMPIFGGEGGNHALLDGVELADAVVKVVASPGKDHLSKAVASYYAGAWKRSQEAVRRSTQRFFLLHRPAAEWKEIAEKKKKAV.

The signal sequence occupies residues 1 to 21 (MAKPQATVLIIGAGISGLTTS). Glu-35 and Ala-46 together coordinate FAD. The N-linked (GlcNAc...) asparagine glycan is linked to Asn-92. Arg-119 contributes to the FAD binding site. N-linked (GlcNAc...) asparagine glycans are attached at residues Asn-170 and Asn-231. Positions 326 and 339 each coordinate FAD.

It belongs to the paxM FAD-dependent monooxygenase family. FAD serves as cofactor.

It participates in secondary metabolite biosynthesis. Functionally, FAD-dependent monooxygenase; part of the gene cluster that mediates the biosynthesis of neosartoricin B, a prenylated anthracenone that probably exhibits T-cell antiproliferative activity, suggestive of a physiological role as an immunosuppressive agent. The non-reducing polyketide synthase nscA probably synthesizes and cyclizes the decaketide backbone. The hydrolase nscB then mediates the product release through hydrolysis followed by spontaneous decarboxylation. The prenyltransferase nscD catalyzes the addition of the dimethylallyl group to the aromatic C5. The FAD-dependent monooxygenase nscC is then responsible for the stereospecific hydroxylation at C2. Neosartoricin B can be converted into two additional compounds neosartoricins C and D. Neosartoricin C is a spirocyclic compound that is cyclized through the attack of C3 hydroxyl on C14, followed by dehydration. On the other hand, neosartoricin D is a further cyclized compound in which attack of C2 on C14 in neosartoricin C results in the formation of the acetal-containing dioxabicyclo-octanone ring. Both of these compounds are novel and possibly represent related metabolites of the gene cluster. The protein is FAD-dependent monooxygenase nscC of Arthroderma otae (strain ATCC MYA-4605 / CBS 113480) (Microsporum canis).